The following is a 228-amino-acid chain: MKFAVVVFPGSNCDVDMYHAISDELGEEVEYVWHDVDCLDDFDAILLPGGFSYGDYLRSGAIARFSNVMKAIKKAADEGKPILGVCNGFQILLEAGLLPGAMRRNNTLTFICRPIKLRVENNETMFTSQYEQGEVITIPIAHGEGNYYCDEQTLQQLIANNQIVFRYEGENPNGSLFNIAGIVNEKGNVLGMMPHPERAVHELLGGADGLKLFQSIVTYWRDAHVVTT.

The Glutamine amidotransferase type-1 domain maps to 3-226 (FAVVVFPGSN…VTYWRDAHVV (224 aa)). Cysteine 86 serves as the catalytic Nucleophile. Active-site residues include histidine 195 and glutamate 197.

In terms of assembly, part of the FGAM synthase complex composed of 1 PurL, 1 PurQ and 2 PurS subunits.

It is found in the cytoplasm. It catalyses the reaction N(2)-formyl-N(1)-(5-phospho-beta-D-ribosyl)glycinamide + L-glutamine + ATP + H2O = 2-formamido-N(1)-(5-O-phospho-beta-D-ribosyl)acetamidine + L-glutamate + ADP + phosphate + H(+). The enzyme catalyses L-glutamine + H2O = L-glutamate + NH4(+). The protein operates within purine metabolism; IMP biosynthesis via de novo pathway; 5-amino-1-(5-phospho-D-ribosyl)imidazole from N(2)-formyl-N(1)-(5-phospho-D-ribosyl)glycinamide: step 1/2. In terms of biological role, part of the phosphoribosylformylglycinamidine synthase complex involved in the purines biosynthetic pathway. Catalyzes the ATP-dependent conversion of formylglycinamide ribonucleotide (FGAR) and glutamine to yield formylglycinamidine ribonucleotide (FGAM) and glutamate. The FGAM synthase complex is composed of three subunits. PurQ produces an ammonia molecule by converting glutamine to glutamate. PurL transfers the ammonia molecule to FGAR to form FGAM in an ATP-dependent manner. PurS interacts with PurQ and PurL and is thought to assist in the transfer of the ammonia molecule from PurQ to PurL. The chain is Phosphoribosylformylglycinamidine synthase subunit PurQ from Anoxybacillus flavithermus (strain DSM 21510 / WK1).